Reading from the N-terminus, the 901-residue chain is Pantothenate kinase 2 (901 aa).

Over residues 1–10 the composition is skewed to acidic residues; the sequence is MAGQEDEYDP. Residues 1–50 form a disordered region; sequence MAGQEDEYDPILDNKREAEAKSQVSVAADKNMAPSTSGTPIHRSGSRPQL. The segment at 1–466 is pantothenate kinase; the sequence is MAGQEDEYDP…LGDLDEKISW (466 aa). A 4'-phosphopantetheine phosphatase region spans residues 467-901; that stretch reads MEKFVRRGTE…CVCRYEPPSL (435 aa). Residues Asp731, Asn732, and Asp767 each contribute to the Mn(2+) site. The Subfamily II EGMGR motif motif lies at 851 to 855; the sequence is EGMGR.

In the N-terminal section; belongs to the type II pantothenate kinase family. The protein in the C-terminal section; belongs to the damage-control phosphatase family. Phosphopantetheine phosphatase II subfamily. Requires Mn(2+) as cofactor. Ni(2+) serves as cofactor. Highly expressed in leaves and developing seeds. Expressed in roots, stems and flowers.

It catalyses the reaction (R)-pantothenate + ATP = (R)-4'-phosphopantothenate + ADP + H(+). The enzyme catalyses (R)-4'-phosphopantothenate + H2O = (R)-pantothenate + phosphate. It carries out the reaction (R)-4'-phosphopantetheine + H2O = (R)-pantetheine + phosphate. The catalysed reaction is (R)-4'-phosphopantetheine sulfonate + H2O = (R)-pantetheine sulfonate + phosphate. It functions in the pathway cofactor biosynthesis; coenzyme A biosynthesis; CoA from (R)-pantothenate: step 1/5. Its activity is regulated as follows. Activity is strongly promoted by Co(2+), Ni(2+) and Mn(2+). Activity is inhibited by EDTA. Functionally, catalyzes the phosphorylation of pantothenate the first step in CoA biosynthesis. May play a role in the physiological regulation of the intracellular CoA concentration. Functionally redudant with PANK1. The phosphatase activity shows preference for normal or oxidatively damaged intermediates of 4'-phosphopantetheine, which provides strong indirect evidence that the phosphatase activity pre-empts damage in the CoA pathway. Hydrolyzing excess 4'-phosphopantetheine could constitute a directed overflow mechanism to prevent its oxidation to the S-sulfonate, sulfonate, or other forms. Hydrolyzing 4'-phosphopantetheine sulfonate or S-sulfonate would forestall their conversion to inactive forms of CoA and acyl carrier protein. The sequence is that of Pantothenate kinase 2 (PANK2) from Arabidopsis thaliana (Mouse-ear cress).